We begin with the raw amino-acid sequence, 673 residues long: Probable urea active transporter 2 (673 aa).

The next 14 helical transmembrane spans lie at 8–28, 83–103, 132–152, 164–184, 196–218, 249–269, 287–307, 336–356, 391–411, 424–446, 451–471, 492–512, 559–579, and 592–612; these read GYGY…MAII, IMGG…FLFL, VYLF…LLGG, TVAA…LGGL, VMIY…LIGS, MMYL…GDPG, LMGG…AGLA, IYGM…VMLF, QLVR…GALS, LLTF…LFWN, FSLV…WLAS, FVGN…LSYI, IGIN…ALLG, and LIIV…LFPL.

It belongs to the sodium:solute symporter (SSF) (TC 2.A.21) family.

It is found in the endoplasmic reticulum membrane. Involved in active transport of urea. The sequence is that of Probable urea active transporter 2 (dur3-2) from Schizosaccharomyces pombe (strain 972 / ATCC 24843) (Fission yeast).